The sequence spans 220 residues: Protein-L-isoaspartate O-methyltransferase (220 aa).

The active site involves serine 65.

The protein belongs to the methyltransferase superfamily. L-isoaspartyl/D-aspartyl protein methyltransferase family.

The protein localises to the cytoplasm. The enzyme catalyses [protein]-L-isoaspartate + S-adenosyl-L-methionine = [protein]-L-isoaspartate alpha-methyl ester + S-adenosyl-L-homocysteine. Its function is as follows. Catalyzes the methyl esterification of L-isoaspartyl residues in peptides and proteins that result from spontaneous decomposition of normal L-aspartyl and L-asparaginyl residues. It plays a role in the repair and/or degradation of damaged proteins. This is Protein-L-isoaspartate O-methyltransferase from Pelodictyon phaeoclathratiforme (strain DSM 5477 / BU-1).